The following is a 125-amino-acid chain: Small ribosomal subunit protein eS26 (125 aa).

Belongs to the eukaryotic ribosomal protein eS26 family.

In Sterkiella nova (Ciliate), this protein is Small ribosomal subunit protein eS26 (RPS26).